The following is a 121-amino-acid chain: Large ribosomal subunit protein bL12 (121 aa).

It belongs to the bacterial ribosomal protein bL12 family. Homodimer. Part of the ribosomal stalk of the 50S ribosomal subunit. Forms a multimeric L10(L12)X complex, where L10 forms an elongated spine to which 2 to 4 L12 dimers bind in a sequential fashion. Binds GTP-bound translation factors.

In terms of biological role, forms part of the ribosomal stalk which helps the ribosome interact with GTP-bound translation factors. Is thus essential for accurate translation. This is Large ribosomal subunit protein bL12 from Pseudomonas syringae pv. tomato (strain ATCC BAA-871 / DC3000).